The sequence spans 72 residues: Translation initiation factor IF-1 (72 aa).

Positions 1–72 (MAKEDVIEVE…NRGRIVYRYK (72 aa)) constitute an S1-like domain.

This sequence belongs to the IF-1 family. In terms of assembly, component of the 30S ribosomal translation pre-initiation complex which assembles on the 30S ribosome in the order IF-2 and IF-3, IF-1 and N-formylmethionyl-tRNA(fMet); mRNA recruitment can occur at any time during PIC assembly.

The protein localises to the cytoplasm. Its function is as follows. One of the essential components for the initiation of protein synthesis. Stabilizes the binding of IF-2 and IF-3 on the 30S subunit to which N-formylmethionyl-tRNA(fMet) subsequently binds. Helps modulate mRNA selection, yielding the 30S pre-initiation complex (PIC). Upon addition of the 50S ribosomal subunit IF-1, IF-2 and IF-3 are released leaving the mature 70S translation initiation complex. The protein is Translation initiation factor IF-1 of Moorella thermoacetica (strain ATCC 39073 / JCM 9320).